A 500-amino-acid chain; its full sequence is Glutathione gamma-glutamylcysteinyltransferase 1 (500 aa).

In terms of domain architecture, Peptidase C83 spans 1 to 221; the sequence is MEVASLYRRV…GFMLVSRRSS (221 aa). Active-site residues include Cys56, His162, and Asp180.

It belongs to the phytochelatin synthase family. In terms of tissue distribution, expressed in roots and shoots.

It carries out the reaction [Glu(-Cys)](n)-Gly + glutathione + H(+) = [Glu(-Cys)](n+1)-Gly + glycine. With respect to regulation, requires cadmium for activity. Functionally, involved in the synthesis of phytochelatins (PC) and homophytochelatins (hPC), the heavy-metal-binding peptides of plants. This is Glutathione gamma-glutamylcysteinyltransferase 1 (PCS1) from Triticum aestivum (Wheat).